Reading from the N-terminus, the 216-residue chain is PEP-dependent dihydroxyacetone kinase 2, ADP-binding subunit DhaL (216 aa).

A DhaL domain is found at 9–210 (AFFGHVLQDM…SWMLMNVILE (202 aa)). Residues D33, D38, and D40 each contribute to the Mg(2+) site. ADP contacts are provided by residues 41–44 (HGIN), 84–85 (AS), G126, M135, R182, and 195–197 (DPG).

As to quaternary structure, homodimer. The dihydroxyacetone kinase complex is composed of a homodimer of DhaM, a homodimer of DhaK and the subunit DhaL. Mg(2+) is required as a cofactor.

It localises to the cytoplasm. It carries out the reaction dihydroxyacetone + phosphoenolpyruvate = dihydroxyacetone phosphate + pyruvate. It participates in polyol metabolism; glycerol degradation. Functionally, ADP-binding subunit of the dihydroxyacetone kinase, which is responsible for the phosphoenolpyruvate (PEP)-dependent phosphorylation of dihydroxyacetone. DhaL-ADP is converted to DhaL-ATP via a phosphoryl group transfer from DhaM and transmits it to dihydroxyacetone binds to DhaK. This is PEP-dependent dihydroxyacetone kinase 2, ADP-binding subunit DhaL from Listeria innocua serovar 6a (strain ATCC BAA-680 / CLIP 11262).